We begin with the raw amino-acid sequence, 301 residues long: Probable alpha-L-glutamate ligase 1 (301 aa).

The region spanning Leu104 to Glu287 is the ATP-grasp domain. ATP is bound by residues Lys141, Glu178–Tyr179, Asp187, and Arg211–Asn213. Mg(2+) is bound by residues Asp248, Glu260, and Asn262. Mn(2+) contacts are provided by Asp248, Glu260, and Asn262.

It belongs to the RimK family. Requires Mg(2+) as cofactor. Mn(2+) is required as a cofactor.

This chain is Probable alpha-L-glutamate ligase 1, found in Shewanella oneidensis (strain ATCC 700550 / JCM 31522 / CIP 106686 / LMG 19005 / NCIMB 14063 / MR-1).